The sequence spans 268 residues: Small ribosomal subunit protein eS1 (268 aa).

Disordered regions lie at residues 1-21 (MAVG…KKKV) and 238-268 (GGGK…QEAV).

It belongs to the eukaryotic ribosomal protein eS1 family. Component of the small ribosomal subunit. Mature ribosomes consist of a small (40S) and a large (60S) subunit. The 40S subunit contains about 33 different proteins and 1 molecule of RNA (18S). The 60S subunit contains about 49 different proteins and 3 molecules of RNA (28S, 5.8S and 5S).

Its subcellular location is the cytoplasm. Its function is as follows. Essential for oogenesis; required for late follicle cell development. This chain is Small ribosomal subunit protein eS1, found in Drosophila ananassae (Fruit fly).